Here is a 258-residue protein sequence, read N- to C-terminus: Transcriptional repressor AccR (258 aa).

The region spanning 6–61 is the HTH deoR-type domain; the sequence is TQDRQAKIVELLRDEQFLAIGRLTEHFQISVATARRDLSELHEAGLLRRTHGGAVS. Positions 23–42 form a DNA-binding region, H-T-H motif; sequence LAIGRLTEHFQISVATARRD.

Its function is as follows. Represses opine catabolism and conjugal transfer of the nopaline Ti plasmid pTiC58. This is Transcriptional repressor AccR (accR) from Agrobacterium fabrum (strain C58 / ATCC 33970) (Agrobacterium tumefaciens (strain C58)).